Here is a 306-residue protein sequence, read N- to C-terminus: MIAQVIDGRAEAARLTDNVRARAHRFTDEFGRCPGLAVVLIGDDPASSVYVKAKTEKARSTGILSSSHRLPSDTTEDALLRLIDQLNRDRTVDGILVQLPLPPHIAPERVLQRILPCKDVDGFHPVNAGLLATGQPGLVPCTPLGCLRLVQSVAAELVGQNVVVVGRSTIVGRPAAQVFLNADCSVTILHKESRDVPGHCRSADILVVAAGSPGLVRRDWVKPGAVVIDVGINRIPVSSGYRLVGDVDFEGVQYVASAITPVPGGVGPMTVAALMENTVACAEALAIRAPEVMSPDNRLHFDHADV.

NADP(+) is bound by residues 166–168 (GRS) and I232.

It belongs to the tetrahydrofolate dehydrogenase/cyclohydrolase family. In terms of assembly, homodimer.

It catalyses the reaction (6R)-5,10-methylene-5,6,7,8-tetrahydrofolate + NADP(+) = (6R)-5,10-methenyltetrahydrofolate + NADPH. It carries out the reaction (6R)-5,10-methenyltetrahydrofolate + H2O = (6R)-10-formyltetrahydrofolate + H(+). Its pathway is one-carbon metabolism; tetrahydrofolate interconversion. Catalyzes the oxidation of 5,10-methylenetetrahydrofolate to 5,10-methenyltetrahydrofolate and then the hydrolysis of 5,10-methenyltetrahydrofolate to 10-formyltetrahydrofolate. The polypeptide is Bifunctional protein FolD (Methylorubrum extorquens (strain CM4 / NCIMB 13688) (Methylobacterium extorquens)).